We begin with the raw amino-acid sequence, 498 residues long: Glutamate--tRNA ligase (498 aa).

The 'HIGH' region motif lies at 11 to 21 (PSPTGHLHIGN). The 'KMSKS' region signature appears at 261 to 265 (KLSKR). ATP is bound at residue lysine 264.

The protein belongs to the class-I aminoacyl-tRNA synthetase family. Glutamate--tRNA ligase type 1 subfamily. Monomer.

It is found in the cytoplasm. The catalysed reaction is tRNA(Glu) + L-glutamate + ATP = L-glutamyl-tRNA(Glu) + AMP + diphosphate. Its function is as follows. Catalyzes the attachment of glutamate to tRNA(Glu) in a two-step reaction: glutamate is first activated by ATP to form Glu-AMP and then transferred to the acceptor end of tRNA(Glu). This is Glutamate--tRNA ligase from Oenococcus oeni (strain ATCC BAA-331 / PSU-1).